The following is a 71-amino-acid chain: Phosphatidylinositol N-acetylglucosaminyltransferase subunit Y (71 aa).

The Cytoplasmic portion of the chain corresponds to 1 to 3 (MFL). Residues 4–26 (SLPTLTVLIPLVSLAGLFYSASV) traverse the membrane as a helical segment. Topologically, residues 27-44 (EENFPQGCTSTASLCFYS) are lumenal. Residues 45-65 (LLLPITIPVYVFFHLWTWMGI) traverse the membrane as a helical segment. Residues 66–71 (KLFRHN) are Cytoplasmic-facing.

In terms of assembly, component of the glycosylphosphatidylinositol-N-acetylglucosaminyltransferase (GPI-GnT) complex composed at least by PIGA, PIGC, PIGH, PIGP, PIGQ, PIGY and DPM2. Interacts directly with PIGA; this interaction regulates glycosylphosphatidylinositol-N-acetylglucosaminyltransferase activity. Does not interact with Ras proteins.

The protein localises to the endoplasmic reticulum membrane. It functions in the pathway glycolipid biosynthesis; glycosylphosphatidylinositol-anchor biosynthesis. In terms of biological role, part of the glycosylphosphatidylinositol-N-acetylglucosaminyltransferase (GPI-GnT) complex that catalyzes the transfer of N-acetylglucosamine from UDP-N-acetylglucosamine to phosphatidylinositol and participates in the first step of GPI biosynthesis. May act by regulating the catalytic subunit PIGA. This chain is Phosphatidylinositol N-acetylglucosaminyltransferase subunit Y, found in Homo sapiens (Human).